A 118-amino-acid chain; its full sequence is Large ribosomal subunit protein uL18 (118 aa).

This sequence belongs to the universal ribosomal protein uL18 family. Part of the 50S ribosomal subunit; part of the 5S rRNA/L5/L18/L25 subcomplex. Contacts the 5S and 23S rRNAs.

In terms of biological role, this is one of the proteins that bind and probably mediate the attachment of the 5S RNA into the large ribosomal subunit, where it forms part of the central protuberance. This is Large ribosomal subunit protein uL18 from Sulfurovum sp. (strain NBC37-1).